The sequence spans 233 residues: Ribonuclease 3 (233 aa).

Positions 7-136 (KQYLLSEFNI…FIGALYLDQG (130 aa)) constitute an RNase III domain. Glutamate 49 contacts Mg(2+). Aspartate 53 is a catalytic residue. Mg(2+)-binding residues include aspartate 122 and glutamate 125. The active site involves glutamate 125. In terms of domain architecture, DRBM spans 162 to 232 (DFKSRLQEKL…ARAALKLLEE (71 aa)).

Belongs to the ribonuclease III family. As to quaternary structure, homodimer. It depends on Mg(2+) as a cofactor.

It localises to the cytoplasm. The catalysed reaction is Endonucleolytic cleavage to 5'-phosphomonoester.. In terms of biological role, digests double-stranded RNA. Involved in the processing of primary rRNA transcript to yield the immediate precursors to the large and small rRNAs (23S and 16S). Processes some mRNAs, and tRNAs when they are encoded in the rRNA operon. Processes pre-crRNA and tracrRNA of type II CRISPR loci if present in the organism. This chain is Ribonuclease 3, found in Leuconostoc citreum (strain KM20).